The chain runs to 320 residues: GPI-specific phospholipase A2-like PGAP3 (320 aa).

The first 20 residues, 1–20 (MAGLAARLVLLAGAAALASG), serve as a signal peptide directing secretion. Over 21-98 (SQGDREPVYR…QFHGKWPFSR (78 aa)) the chain is Lumenal. The N-linked (GlcNAc...) asparagine glycan is linked to asparagine 40. The helical transmembrane segment at 99–119 (FLFFQEPASAVASFLNGLASL) threads the bilayer. Residues 120 to 135 (VMLCRYRTFVPASSPM) are Cytoplasmic-facing. Residues 136–156 (YHTCVAFAWVSLNAWFWSTVF) traverse the membrane as a helical segment. Residues 157–169 (HTRDTDLTEKMDY) are Lumenal-facing. A helical membrane pass occupies residues 170-190 (FCASTVILHSIYLCCVRTVGL). Topologically, residues 191 to 193 (QHP) are cytoplasmic. A helical transmembrane segment spans residues 194-214 (AVVSAFRALLLLMLTVHVSYL). Residues 215-224 (SLIRFDYGYN) are Lumenal-facing. A helical transmembrane segment spans residues 225 to 245 (LVANVAIGLVNVVWWLAWCLW). The Cytoplasmic segment spans residues 246–257 (NQRRLPHVRKCV). Residues 258–278 (VVVLLLQGLSLLELLDFPPLF) form a helical membrane-spanning segment. Residue tryptophan 279 is a topological domain, lumenal. The helical transmembrane segment at 280-299 (VLDAHAIWHISTIPVHVLFF) threads the bilayer. The Cytoplasmic segment spans residues 300-320 (SFLEDDSLYLLKESEDKFKLD).

This sequence belongs to the PGAP3 family. In terms of tissue distribution, ubiquitously expressed, with highest levels in thyroid and placenta.

It is found in the golgi apparatus membrane. Involved in the fatty acid remodeling steps of GPI-anchor maturation where the unsaturated acyl chain at sn-2 of inositol phosphate is replaced by a saturated stearoyl chain. May catalyze the first step of the fatty acid remodeling, by removing the unsaturated acyl chain at sn-2 of inositol phosphate, generating a lyso-GPI intermediate. The fatty acid remodeling steps is critical for the integration of GPI-APs into lipid rafts. The polypeptide is GPI-specific phospholipase A2-like PGAP3 (Homo sapiens (Human)).